We begin with the raw amino-acid sequence, 37 residues long: Large ribosomal subunit protein bL36c (37 aa).

The protein belongs to the bacterial ribosomal protein bL36 family.

The protein resides in the plastid. Its subcellular location is the chloroplast. This chain is Large ribosomal subunit protein bL36c, found in Gnetum parvifolium (Small-leaved jointfir).